The following is a 43-amino-acid chain: Myotoxin-1 (43 aa).

3 disulfides stabilise this stretch: cysteine 4–cysteine 36, cysteine 11–cysteine 30, and cysteine 18–cysteine 37.

Belongs to the crotamine-myotoxin family. Monomer. Expressed by the venom gland.

Its subcellular location is the secreted. Its function is as follows. Cationic peptide that possesses multiple functions. It acts as a cell-penetrating peptide (CPP), and as a potent voltage-gated potassium channel (Kv) inhibitor. It exhibits antimicrobial activities, hind limb paralysis, and severe muscle necrosis by a non-enzymatic mechanism. This is Myotoxin-1 from Crotalus concolor (Midget faded rattlesnake).